Reading from the N-terminus, the 67-residue chain is Small ribosomal subunit protein eS31 (67 aa).

Zn(2+) contacts are provided by Cys-31, Cys-34, Cys-49, and Cys-52. Residues 31–52 (CPKCGAGVFMAEHLNRFACGKC) form a C4-type zinc finger.

It belongs to the eukaryotic ribosomal protein eS31 family. In terms of assembly, part of the 30S ribosomal subunit. Zn(2+) serves as cofactor.

In Methanococcus maripaludis (strain C6 / ATCC BAA-1332), this protein is Small ribosomal subunit protein eS31.